A 229-amino-acid chain; its full sequence is Prolactin (229 aa).

Positions 1-30 (MDSKGSSQKGSRLLLLLVVSNLLLCQGVVS) are cleaved as a signal peptide. A disulfide bridge links Cys34 with Cys41. Ser56, Ser64, and Ser120 each carry phosphoserine. Intrachain disulfides connect Cys88/Cys204 and Cys221/Cys229.

It belongs to the somatotropin/prolactin family. As to quaternary structure, interacts with PRLR.

Its subcellular location is the secreted. In terms of biological role, prolactin acts primarily on the mammary gland by promoting lactation. The sequence is that of Prolactin (PRL) from Bos taurus (Bovine).